A 515-amino-acid polypeptide reads, in one-letter code: Endoglucanase 23 (515 aa).

Positions 1–29 (MALLSAPVRRRRSRVRVLLVCCCLLLALA) are cleaved as a signal peptide. Catalysis depends on Asp95, which acts as the Nucleophile. N-linked (GlcNAc...) asparagine glycans are attached at residues Asn178, Asn375, and Asn384. The active site involves His426. Residue Asn452 is glycosylated (N-linked (GlcNAc...) asparagine). Catalysis depends on residues Asp477 and Glu486.

It belongs to the glycosyl hydrolase 9 (cellulase E) family.

The protein localises to the secreted. The catalysed reaction is Endohydrolysis of (1-&gt;4)-beta-D-glucosidic linkages in cellulose, lichenin and cereal beta-D-glucans.. The polypeptide is Endoglucanase 23 (GLU12) (Oryza sativa subsp. japonica (Rice)).